The following is a 338-amino-acid chain: Ketol-acid reductoisomerase (NADP(+)) (338 aa).

The region spanning 1–181 is the KARI N-terminal Rossmann domain; the sequence is MKVFYDKDCD…GGGRTGIIET (181 aa). NADP(+)-binding positions include 24 to 27, arginine 47, serine 50, threonine 52, and 82 to 85; these read YGSQ and DEFQ. The active site involves histidine 107. NADP(+) is bound at residue glycine 133. The region spanning 182–327 is the KARI C-terminal knotted domain; it reads TFKDETETDL…EQLRSMMPWI (146 aa). Mg(2+) is bound by residues aspartate 190, glutamate 194, glutamate 226, and glutamate 230. Residue serine 251 coordinates substrate.

The protein belongs to the ketol-acid reductoisomerase family. Mg(2+) is required as a cofactor.

It catalyses the reaction (2R)-2,3-dihydroxy-3-methylbutanoate + NADP(+) = (2S)-2-acetolactate + NADPH + H(+). The catalysed reaction is (2R,3R)-2,3-dihydroxy-3-methylpentanoate + NADP(+) = (S)-2-ethyl-2-hydroxy-3-oxobutanoate + NADPH + H(+). The protein operates within amino-acid biosynthesis; L-isoleucine biosynthesis; L-isoleucine from 2-oxobutanoate: step 2/4. It functions in the pathway amino-acid biosynthesis; L-valine biosynthesis; L-valine from pyruvate: step 2/4. In terms of biological role, involved in the biosynthesis of branched-chain amino acids (BCAA). Catalyzes an alkyl-migration followed by a ketol-acid reduction of (S)-2-acetolactate (S2AL) to yield (R)-2,3-dihydroxy-isovalerate. In the isomerase reaction, S2AL is rearranged via a Mg-dependent methyl migration to produce 3-hydroxy-3-methyl-2-ketobutyrate (HMKB). In the reductase reaction, this 2-ketoacid undergoes a metal-dependent reduction by NADPH to yield (R)-2,3-dihydroxy-isovalerate. This Pseudomonas putida (strain W619) protein is Ketol-acid reductoisomerase (NADP(+)).